The following is a 66-amino-acid chain: Large ribosomal subunit protein bL31 (66 aa).

Zn(2+) contacts are provided by C16, C18, C36, and C39.

Belongs to the bacterial ribosomal protein bL31 family. Type A subfamily. As to quaternary structure, part of the 50S ribosomal subunit. Zn(2+) is required as a cofactor.

Binds the 23S rRNA. The chain is Large ribosomal subunit protein bL31 from Campylobacter lari (strain RM2100 / D67 / ATCC BAA-1060).